Here is a 694-residue protein sequence, read N- to C-terminus: Putative L-type lectin-domain containing receptor kinase II.2 (694 aa).

The first 24 residues, 1-24 (MAGVLRSLRFWMIICVQVLSLVLA), serve as a signal peptide directing secretion. Residues 25 to 318 (QDRDEFVYHD…PTSRSKDSKN (294 aa)) are Extracellular-facing. Residues 27 to 272 (RDEFVYHDFS…DQYILGWSFK (246 aa)) form a legume-lectin like region. N-linked (GlcNAc...) asparagine glycosylation is found at asparagine 57, asparagine 58, asparagine 73, asparagine 131, asparagine 172, asparagine 183, asparagine 201, asparagine 208, asparagine 240, and asparagine 246. Residues 283–314 (SKILDPPNRPPPPSSPPPPPPPPPTPPTSRSK) are disordered. Residues 289-309 (PNRPPPPSSPPPPPPPPPTPP) show a composition bias toward pro residues. The chain crosses the membrane as a helical span at residues 319 to 339 (IIIICVTVTSIAFLLMLGGFL). The Cytoplasmic portion of the chain corresponds to 340–694 (YLYKKKKYAE…EDVTILFGGR (355 aa)). A Protein kinase domain is found at 375 to 650 (FRENRLLGAG…IQYLEGNATI (276 aa)). ATP contacts are provided by residues 381–389 (LGAGGFGKV) and lysine 403. Aspartate 500 acts as the Proton acceptor in catalysis.

The protein in the C-terminal section; belongs to the protein kinase superfamily. Ser/Thr protein kinase family. This sequence in the N-terminal section; belongs to the leguminous lectin family.

It is found in the cell membrane. It catalyses the reaction L-seryl-[protein] + ATP = O-phospho-L-seryl-[protein] + ADP + H(+). The enzyme catalyses L-threonyl-[protein] + ATP = O-phospho-L-threonyl-[protein] + ADP + H(+). This is Putative L-type lectin-domain containing receptor kinase II.2 (LECRK22) from Arabidopsis thaliana (Mouse-ear cress).